Here is a 372-residue protein sequence, read N- to C-terminus: Tetraacyldisaccharide 4'-kinase (372 aa).

ATP is bound at residue 60-67 (TVGGSGKT).

It belongs to the LpxK family.

The catalysed reaction is a lipid A disaccharide + ATP = a lipid IVA + ADP + H(+). Its pathway is glycolipid biosynthesis; lipid IV(A) biosynthesis; lipid IV(A) from (3R)-3-hydroxytetradecanoyl-[acyl-carrier-protein] and UDP-N-acetyl-alpha-D-glucosamine: step 6/6. Transfers the gamma-phosphate of ATP to the 4'-position of a tetraacyldisaccharide 1-phosphate intermediate (termed DS-1-P) to form tetraacyldisaccharide 1,4'-bis-phosphate (lipid IVA). The polypeptide is Tetraacyldisaccharide 4'-kinase (Psychrobacter cryohalolentis (strain ATCC BAA-1226 / DSM 17306 / VKM B-2378 / K5)).